The chain runs to 1208 residues: Lysine-specific demethylase JMJ17 (1208 aa).

Residues 1–36 (MLLCDSCNKGWHIYCLSPPLKHIPLGNWYCLECLNT) form a PHD-type 1; degenerate zinc finger. The Zn(2+) site is built by C4, C7, C30, and C33. A JmjC domain is found at 126-292 (EYCGSPWNLN…YGGSGAELYR (167 aa)). The Fe cation site is built by H172, E174, and H260. Residues C369, C372, C383, C385, C392, H395, C400, and C402 each coordinate Zn(2+). A C5HC2 zinc finger spans residues 369–421 (CIICQQFLHLSAIVCNCRPSVFACLEHWKHLCECEPTKLRLEYRYTLAELDMM). A Nuclear localization signal motif is present at residues 613-620 (SKKISSAK). A PHD-type 2 zinc finger spans residues 1099-1145 (MLHCICLKPYNSRSMVSCSQCGEWYHTYCLKLHWRPKAYVCSACCPL). Zn(2+)-binding residues include C1102, C1104, C1116, C1119, H1124, C1127, C1139, and C1142.

This sequence belongs to the JARID1 histone demethylase family. It depends on Fe(2+) as a cofactor. In terms of tissue distribution, expressed in inflorescences, roots, seedlings and siliques, and, at low levels, in leaves and stems.

It localises to the nucleus. It carries out the reaction N(6),N(6),N(6)-trimethyl-L-lysyl(4)-[histone H3] + 2-oxoglutarate + O2 = N(6),N(6)-dimethyl-L-lysyl(4)-[histone H3] + formaldehyde + succinate + CO2. The catalysed reaction is N(6),N(6)-dimethyl-L-lysyl(4)-[histone H3] + 2-oxoglutarate + O2 = N(6)-methyl-L-lysyl(4)-[histone H3] + formaldehyde + succinate + CO2. The enzyme catalyses N(6)-methyl-L-lysyl(4)-[histone H3] + 2-oxoglutarate + O2 = L-lysyl(4)-[histone H3] + formaldehyde + succinate + CO2. It catalyses the reaction N(6),N(6),N(6)-trimethyl-L-lysyl(4)-[histone H3] + 3 2-oxoglutarate + 3 O2 = L-lysyl(4)-[histone H3] + 3 formaldehyde + 3 succinate + 3 CO2. Functions as a histone H3 'Lys-4' (H3K4me) demethylase involved in the regulation of gene expression. Active on H3K4me1, H3K4me2 and H3K4me3. Repressor of the abscisic acid (ABA) signaling pathway, especially during stomatal closure regulation. Negative regulator of responses to dehydration stress by binding directly to the chromatin of SRK2E/OST1 and demethylating H3K4me3 to regulates its expression. Together with JMJ14 and JMJ16, required for plant growth and development. This Arabidopsis thaliana (Mouse-ear cress) protein is Lysine-specific demethylase JMJ17.